The sequence spans 341 residues: MYSLSDFDFELPQELIAQTPLAERSASRLLHVAQDGMIDRAFADIVDLLNPGDLLVFNDTRVLKARFFGVKETGGKVEVLVERVIDSAHVHAQIRASKSPVPGMKIRLADAFDVIVGERAGEFYELQFPGDIFALIEAHGRLPLPPYIEHAADAYDETRYQTVYAKTPGAVAAPTAGLHFDQALLDTLKAKGVQFAYVTLHVGAGTFQPVRNENLAEHNMHSEWYTISQETVGAVHAAQAAGHNIVAVGTTSMRALESASQSGSLQAGSADTRLFITPGYTFKTVTRLITNFHLPKSTLLMLVSAFAGYDAIRAAYQHAISQRYRFFSYGDAMFLTRMPPC.

The protein belongs to the QueA family. As to quaternary structure, monomer.

It is found in the cytoplasm. It carries out the reaction 7-aminomethyl-7-carbaguanosine(34) in tRNA + S-adenosyl-L-methionine = epoxyqueuosine(34) in tRNA + adenine + L-methionine + 2 H(+). Its pathway is tRNA modification; tRNA-queuosine biosynthesis. Its function is as follows. Transfers and isomerizes the ribose moiety from AdoMet to the 7-aminomethyl group of 7-deazaguanine (preQ1-tRNA) to give epoxyqueuosine (oQ-tRNA). This is S-adenosylmethionine:tRNA ribosyltransferase-isomerase from Herminiimonas arsenicoxydans.